We begin with the raw amino-acid sequence, 608 residues long: Formate hydrogenlyase subunit 3 (608 aa).

The next 12 helical transmembrane spans lie at 10 to 26, 44 to 67, 76 to 93, 116 to 140, 153 to 173, 197 to 218, 229 to 251, 258 to 280, 296 to 312, 416 to 440, 453 to 476, and 502 to 521; these read GVAW…LFSF, LYTA…LSLV, LNAI…FVSL, AAAV…MALC, LWFA…WLLW, IWLL…HGWV, AAAL…LSLL, WWGI…YALV, IGII…GIAL, LAVG…VTFL, CAPL…GVAA, and MITL…MAIC.

Belongs to the complex I subunit 4 family. As to quaternary structure, FHL comprises of a formate dehydrogenase, unidentified electron carriers and a hydrogenase (isoenzyme 3). In this non-energy conserving pathway molecular hydrogen and carbodioxide from formate are released.

It is found in the cell inner membrane. The sequence is that of Formate hydrogenlyase subunit 3 (hycC) from Escherichia coli (strain K12).